Here is a 428-residue protein sequence, read N- to C-terminus: GTPase Obg (428 aa).

The region spanning 1–158 (MFVDQVKVYV…RDVILELKVL (158 aa)) is the Obg domain. A disordered region spans residues 118-145 (KGGRGGRGNSRFATPANPAPQLSENGEP). The OBG-type G domain maps to 159-329 (ADVGLVGFPS…LLFEIANQLE (171 aa)). GTP contacts are provided by residues 165-172 (GFPSVGKS), 190-194 (FTTLV), 212-215 (DLPG), 282-285 (NKMD), and 310-312 (SAI). The Mg(2+) site is built by serine 172 and threonine 192. One can recognise an OCT domain in the interval 350 to 428 (RFDEGDAPFE…LLEFEFEFID (79 aa)).

Belongs to the TRAFAC class OBG-HflX-like GTPase superfamily. OBG GTPase family. As to quaternary structure, monomer. Requires Mg(2+) as cofactor.

The protein resides in the cytoplasm. In terms of biological role, an essential GTPase which binds GTP, GDP and possibly (p)ppGpp with moderate affinity, with high nucleotide exchange rates and a fairly low GTP hydrolysis rate. Plays a role in control of the cell cycle, stress response, ribosome biogenesis and in those bacteria that undergo differentiation, in morphogenesis control. This is GTPase Obg from Bacillus pumilus (strain SAFR-032).